The sequence spans 98 residues: Small ribosomal subunit protein bS6 (98 aa).

It belongs to the bacterial ribosomal protein bS6 family.

Its function is as follows. Binds together with bS18 to 16S ribosomal RNA. The chain is Small ribosomal subunit protein bS6 from Lactobacillus johnsonii (strain CNCM I-12250 / La1 / NCC 533).